A 77-amino-acid polypeptide reads, in one-letter code: Large ribosomal subunit protein uL29 (77 aa).

This sequence belongs to the universal ribosomal protein uL29 family.

The polypeptide is Large ribosomal subunit protein uL29 (Corynebacterium urealyticum (strain ATCC 43042 / DSM 7109)).